Reading from the N-terminus, the 806-residue chain is ATP-dependent zinc metalloprotease FTSH 9, chloroplastic (806 aa).

A chloroplast-targeting transit peptide spans 1–62; the sequence is MTSIELLSPL…SSIQLPQSVP (62 aa). The tract at residues 84 to 116 is disordered; that stretch reads SSRTIVNCQEGDQKASSSEGEGKTNKDKGRKQG. A run of 2 helical transmembrane segments spans residues 133–153 and 271–291; these read IIQA…MFVV and GGFF…AGLL. 369–376 serves as a coordination point for ATP; the sequence is GLPGTGKT. H594 contacts Zn(2+). The active site involves E595. Zn(2+) is bound by residues H598 and D677.

This sequence in the N-terminal section; belongs to the AAA ATPase family. The protein in the C-terminal section; belongs to the peptidase M41 family. Zn(2+) is required as a cofactor.

It localises to the plastid. Its subcellular location is the chloroplast thylakoid membrane. Probable ATP-dependent zinc metallopeptidase. This is ATP-dependent zinc metalloprotease FTSH 9, chloroplastic (FTSH9) from Arabidopsis thaliana (Mouse-ear cress).